Reading from the N-terminus, the 837-residue chain is Enterin neuropeptides (837 aa).

Positions 1–25 are cleaved as a signal peptide; that stretch reads MAKHDVTVMTLLLVVCALHVFDAQG. A propeptide spanning residues 26-47 is cleaved from the precursor; that stretch reads TDVKLNDGFLRSGIMNIPFQRR. The residue at position 57 (Val-57) is a Valine amide. The propeptide occupies 61–134; it reads SGFQSPVSPS…ENKRFSKENE (74 aa). Val-146 is modified (valine amide). The propeptide occupies 150–178; it reads MDLSALEKELIAKLKAADLLSPLETEAPG. Leu-190 bears the Leucine amide mark. The propeptide occupies 194–201; it reads MPVDVFPR. Val-211 bears the Valine amide mark. A propeptide spanning residues 215-234 is cleaved from the precursor; that stretch reads SGNGENYFDDLDTFGDISQR. A Valine amide modification is found at Val-244. Residues 248–266 constitute a propeptide that is removed on maturation; that stretch reads GNTDFSRNPLARLSQVQNR. Val-276 bears the Valine amide mark. The propeptide occupies 280 to 285; sequence SVHNIV. The residue at position 297 (Val-297) is a Valine amide. Positions 301–325 are excised as a propeptide; it reads DFEDASEGLDEEEGDIDGYSDDLDV. A valine amide mark is found at Val-336, Val-348, Val-360, Val-372, Val-384, Val-396, Val-408, Val-420, Val-432, Val-444, Val-456, Val-468, Val-480, Val-492, Val-504, Val-516, Val-528, and Val-540. Residues 544–595 constitute a propeptide that is removed on maturation; the sequence is ELGEDEINFLKEVDAADISRQLAEEDEKEAMVSVDDKETLSNEEDASEDDFE. The disordered stretch occupies residues 567 to 594; that stretch reads EEDEKEAMVSVDDKETLSNEEDASEDDF. A compositionally biased stretch (acidic residues) spans 584–593; it reads SNEEDASEDD. Residue Glu-598 is modified to Pyrrolidone carboxylic acid (Glu); in form ENl'. Valine amide is present on Val-606. Positions 610 to 627 are excised as a propeptide; sequence DEEGDMGVEMEEEMESEK. Position 637 is a leucine amide (Leu-637). A Pyrrolidone carboxylic acid modification is found at Gln-641. Position 649 is a valine amide (Val-649). The residue at position 653 (Gln-653) is a Pyrrolidone carboxylic acid. Residues Val-661 and Val-673 each carry the valine amide modification. Position 677 is a pyrrolidone carboxylic acid (Gln-677). A valine amide mark is found at Val-685 and Val-697. Gln-701 is subject to Pyrrolidone carboxylic acid. Val-709 carries the post-translational modification Valine amide. Gln-713 carries the post-translational modification Pyrrolidone carboxylic acid. The residue at position 721 (Val-721) is a Valine amide. Gln-725 carries the post-translational modification Pyrrolidone carboxylic acid. Val-733 is subject to Valine amide. Residues 734–837 constitute a propeptide that is removed on maturation; sequence GKRSGAEDID…DSHIMATSST (104 aa). Positions 772-837 are disordered; the sequence is GQPAAANEEE…DSHIMATSST (66 aa). Acidic residues predominate over residues 778–791; it reads NEEELQQEAAEESE.

As to expression, high expression in gut and CNS.

It localises to the secreted. Functionally, reduce interneurons B4/5 activity. May play a regulatory role in nonfeeding behaviors. The polypeptide is Enterin neuropeptides (ENPP) (Aplysia californica (California sea hare)).